We begin with the raw amino-acid sequence, 124 residues long: Large ribosomal subunit protein bL19 (124 aa).

Belongs to the bacterial ribosomal protein bL19 family.

This protein is located at the 30S-50S ribosomal subunit interface and may play a role in the structure and function of the aminoacyl-tRNA binding site. The polypeptide is Large ribosomal subunit protein bL19 (Orientia tsutsugamushi (strain Ikeda) (Rickettsia tsutsugamushi)).